Consider the following 291-residue polypeptide: Lipoyl synthase, mitochondrial (291 aa).

Residues C45, C50, C56, C71, C75, C78, and S283 each contribute to the [4Fe-4S] cluster site. Residues 57 to 272 (WGEGTATFMI…EKIGKELGFR (216 aa)) enclose the Radical SAM core domain.

The protein belongs to the radical SAM superfamily. Lipoyl synthase family. [4Fe-4S] cluster serves as cofactor.

The protein localises to the mitochondrion. The catalysed reaction is [[Fe-S] cluster scaffold protein carrying a second [4Fe-4S](2+) cluster] + N(6)-octanoyl-L-lysyl-[protein] + 2 oxidized [2Fe-2S]-[ferredoxin] + 2 S-adenosyl-L-methionine + 4 H(+) = [[Fe-S] cluster scaffold protein] + N(6)-[(R)-dihydrolipoyl]-L-lysyl-[protein] + 4 Fe(3+) + 2 hydrogen sulfide + 2 5'-deoxyadenosine + 2 L-methionine + 2 reduced [2Fe-2S]-[ferredoxin]. Its pathway is protein modification; protein lipoylation via endogenous pathway; protein N(6)-(lipoyl)lysine from octanoyl-[acyl-carrier-protein]: step 2/2. Its function is as follows. Catalyzes the radical-mediated insertion of two sulfur atoms into the C-6 and C-8 positions of the octanoyl moiety bound to the lipoyl domains of lipoate-dependent enzymes, thereby converting the octanoylated domains into lipoylated derivatives. The sequence is that of Lipoyl synthase, mitochondrial from Nematostella vectensis (Starlet sea anemone).